The following is a 388-amino-acid chain: P2X purinoceptor 4 (388 aa).

At 1–33 the chain is on the cytoplasmic side; it reads MAGCCSVLGSFLFEYDTPRIVLIRSRKVGLMNR. A helical membrane pass occupies residues 34–54; that stretch reads AVQLLILAYVIGWVFVWEKGY. Residues 55-338 lie on the Extracellular side of the membrane; that stretch reads QETDSVVSSV…KFDIIPTMIN (284 aa). ATP contacts are provided by Lys-67 and Lys-69. 2 residues coordinate CTP: Lys-67 and Lys-69. 2 N-linked (GlcNAc...) asparagine glycosylation sites follow: Asn-75 and Asn-110. Intrachain disulfides connect Cys-116–Cys-165, Cys-126–Cys-149, and Cys-132–Cys-159. Asn-153 and Asn-184 each carry an N-linked (GlcNAc...) asparagine glycan. Thr-186 and Leu-188 together coordinate ATP. Residue Thr-186 coordinates CTP. N-linked (GlcNAc...) asparagine glycans are attached at residues Asn-199 and Asn-208. Disulfide bonds link Cys-217-Cys-227 and Cys-261-Cys-270. Residues Asn-293, Arg-295, and Lys-313 each coordinate ATP. 3 residues coordinate CTP: Asn-293, Arg-295, and Lys-313. A helical transmembrane segment spans residues 339–359; sequence VGSGLALLGVATVLCDVIVLY. The Cytoplasmic segment spans residues 360–388; that stretch reads CMKKKYYYRDKKYKYVEDYEQGLSGEMNQ.

The protein belongs to the P2X receptor family. As to quaternary structure, functional P2RXs are organized as homomeric and heteromeric trimers. Forms heterotrimer with P2RX1. Interacts with P2RX7 (via C-terminus); this interaction is functional only in the presence of ATP. Forms heterotrimer with P2RX4; functional differences between homomeric P2RX4 and P2RX4/6 heterotrimer are minor. Interacts with AP1M2. As to expression, widespread distribution in the brain. Strongly expressed in microglial cells. Also expressed in epithelial cells.

Its subcellular location is the cell membrane. The protein localises to the lysosome membrane. It catalyses the reaction K(+)(in) = K(+)(out). It carries out the reaction Na(+)(in) = Na(+)(out). The catalysed reaction is Ca(2+)(in) = Ca(2+)(out). Its activity is regulated as follows. Activated by ATP. pH-dependent and inhibited by acidic pH. Its function is as follows. ATP-gated nonselective transmembrane cation channel permeable to potassium, sodium and calcium. CTP, but not GTP or UTP, functions as a weak affinity agonist for P2RX4. Activated by extracellularly released ATP, it plays multiple role in immunity and central nervous system physiology. Plays a key role in initial steps of T-cell activation and Ca(2+) microdomain formation. Also participates in basal T-cell activity without TCR/CD3 stimulation. Promotes the differentiation and activation of Th17 cells via expression of retinoic acid-related orphan receptor C/RORC. Upon activation, drives microglia motility via the PI3K/Akt pathway. Could also function as an ATP-gated cation channel of lysosomal membranes. This chain is P2X purinoceptor 4 (P2rx4), found in Rattus norvegicus (Rat).